The chain runs to 334 residues: Glyoxylate reductase (334 aa).

NADP(+) is bound by residues 158–161 (LGRI), 180–182 (SRT), and 239–241 (IAR). Active-site residues include arginine 241 and glutamate 270. The active-site Proton donor is histidine 288. NADP(+) is bound at residue 288-290 (HIG).

This sequence belongs to the D-isomer specific 2-hydroxyacid dehydrogenase family. GyaR subfamily. Homodimer.

It localises to the cytoplasm. It catalyses the reaction glycolate + NAD(+) = glyoxylate + NADH + H(+). This is Glyoxylate reductase (gyaR) from Pyrococcus horikoshii (strain ATCC 700860 / DSM 12428 / JCM 9974 / NBRC 100139 / OT-3).